Consider the following 537-residue polypeptide: Asparagine-rich protein (537 aa).

Disordered stretches follow at residues 1-22 (YNNN…QNTN), 187-254 (NMNI…NNNF), 336-372 (YNNN…YGYD), 399-479 (LNNN…DDWG), and 509-528 (DLSK…MKKD). Composition is skewed to low complexity over residues 336–347 (YNNNESNTANPN) and 399–469 (LNNN…NQNN). The span at 470 to 479 (NEDEDDDDWG) shows a compositional bias: acidic residues. Basic and acidic residues predominate over residues 509 to 518 (DLSKKGNDGK).

The polypeptide is Asparagine-rich protein (Plasmodium falciparum).